The following is a 263-amino-acid chain: GTP cyclohydrolase 1 type 2 homolog (263 aa).

5 residues coordinate a divalent metal cation: His-76, His-77, Asp-113, His-231, and Glu-235.

Belongs to the GTP cyclohydrolase I type 2/NIF3 family. Homohexamer.

This Deinococcus radiodurans (strain ATCC 13939 / DSM 20539 / JCM 16871 / CCUG 27074 / LMG 4051 / NBRC 15346 / NCIMB 9279 / VKM B-1422 / R1) protein is GTP cyclohydrolase 1 type 2 homolog.